A 134-amino-acid polypeptide reads, in one-letter code: Cerato-platanin (134 aa).

Positions 1–14 (MKFSILPMIASAMA) are cleaved as a signal peptide. A binding of oligomers of N-acetylglucosamine (GlcNAc) region spans residues 18 to 20 (SYD). Binding of N-acetylglucosamine tetramer (GlcNAc-4) regions lie at residues 31-43 (SVACSNGDHGLMA), 65-68 (GWDS), and 91-95 (DSGRG). Cystine bridges form between Cys34/Cys71 and Cys74/Cys129. Positions 113–116 (AGRV) are binding of oligomers of N-acetylglucosamine (GlcNAc).

The protein belongs to the cerato-platanin family. In terms of assembly, monomer.

It is found in the secreted. It localises to the cell wall. Phytotoxin which causes production of phytoalexin in platanus acerifolia, platanus occidentalis and platanus orientalis. Induces cell necrosis in tobacco leaves, and in callus cells and leaves of P.acerifolia. Induces reactive oxygen species (ROS) synthesis, nitric oxide (NO) production and mitogen-activated protein kinases (MAPKs) phosphorylation in the leaves of A.thaliana and P.acerifolia. Results in H(2)O(2) production on the epidermis around the stomata, rapid closure of the stomata, reduced photosynthetic and CO(2) assimilation rate, and an increase in a number of volatile organic compound (VOC) emission in A.thaliana leaves. Induces overexpression of genes related to salicylic acid- and ethylene-signaling, camalexin synthesis, ROS production and oxidative stress, and genes of various receptor kinases, and down-regulation of a number of jasmonic acid (JA)-signaling genes in A.thaliana leaves. Renders resistance against C.platani in A.thaliana and P.acerifolia. Renders localised resistance of A.thaliana against infection by virulent foliar pathogens B.cinerea and P.syringae pv. tomato. Binds cellulose analog carboxymethyl cellulose (CMC). Expansin-like protein with probable fungal and plant cell wall loosening activity based on its non-enzymatic cellulose weakening activity in vitro. Increases glucose production by cellulase after pre-incubation of cellulose with this protein. In contrast, according to PubMed:23512479, no synergistic effect with cellulases. May have a structural role in the fungal cell wall based on its ability to bind chitin, but does not bind beta-1,3-glucan. The sequence is that of Cerato-platanin from Ceratocystis fimbriata f. sp. platani.